The following is a 491-amino-acid chain: Probable glycine dehydrogenase (decarboxylating) subunit 2 (491 aa).

The residue at position 264 (lysine 264) is an N6-(pyridoxal phosphate)lysine.

The protein belongs to the GcvP family. C-terminal subunit subfamily. In terms of assembly, the glycine cleavage system is composed of four proteins: P, T, L and H. In this organism, the P 'protein' is a heterodimer of two subunits. Pyridoxal 5'-phosphate is required as a cofactor.

The catalysed reaction is N(6)-[(R)-lipoyl]-L-lysyl-[glycine-cleavage complex H protein] + glycine + H(+) = N(6)-[(R)-S(8)-aminomethyldihydrolipoyl]-L-lysyl-[glycine-cleavage complex H protein] + CO2. Functionally, the glycine cleavage system catalyzes the degradation of glycine. The P protein binds the alpha-amino group of glycine through its pyridoxal phosphate cofactor; CO(2) is released and the remaining methylamine moiety is then transferred to the lipoamide cofactor of the H protein. This Coxiella burnetii (strain Dugway 5J108-111) protein is Probable glycine dehydrogenase (decarboxylating) subunit 2.